The primary structure comprises 289 residues: Deleted in azoospermia-like (289 aa).

The disordered stretch occupies residues 1 to 20 (MSANAEAQCGSISEDNTHSS). The RRM domain occupies 36–117 (NTVFVGGIDI…PAIRKQQNLC (82 aa)). The region spanning 162–187 (TYAYSSPAVLIQQQVPVGYQPAYNYQ) is the DAZ domain.

It belongs to the RRM DAZ family.

It is found in the cytoplasm. In terms of biological role, RNA-binding protein, which probably plays a central role in gametogenesis in both males and females. Acts by binding to the 3'-UTR of mRNA, specifically recognizing GUU triplets, and promoting the translation of key transcripts. The protein is Deleted in azoospermia-like (DAZL) of Gallus gallus (Chicken).